Here is a 180-residue protein sequence, read N- to C-terminus: Large ribosomal subunit protein uL5 (180 aa).

This sequence belongs to the universal ribosomal protein uL5 family. As to quaternary structure, part of the 50S ribosomal subunit; part of the 5S rRNA/L5/L18/L25 subcomplex. Contacts the 5S rRNA and the P site tRNA. Forms a bridge to the 30S subunit in the 70S ribosome.

This is one of the proteins that bind and probably mediate the attachment of the 5S RNA into the large ribosomal subunit, where it forms part of the central protuberance. In the 70S ribosome it contacts protein S13 of the 30S subunit (bridge B1b), connecting the 2 subunits; this bridge is implicated in subunit movement. Contacts the P site tRNA; the 5S rRNA and some of its associated proteins might help stabilize positioning of ribosome-bound tRNAs. In Mycoplasma pneumoniae (strain ATCC 29342 / M129 / Subtype 1) (Mycoplasmoides pneumoniae), this protein is Large ribosomal subunit protein uL5.